The sequence spans 525 residues: UPF0288 protein MM_0912 (525 aa).

This sequence belongs to the UPF0288 family.

This is UPF0288 protein MM_0912 from Methanosarcina mazei (strain ATCC BAA-159 / DSM 3647 / Goe1 / Go1 / JCM 11833 / OCM 88) (Methanosarcina frisia).